A 196-amino-acid polypeptide reads, in one-letter code: Small ribosomal subunit protein uS4c (196 aa).

A disordered region spans residues 15-36 (LGTLPGLTSKRPRSGSDLKNPL). The S4 RNA-binding domain occupies 89–150 (MRLDNILFRL…KQRSKALIQN (62 aa)).

Belongs to the universal ribosomal protein uS4 family. As to quaternary structure, part of the 30S ribosomal subunit. Contacts protein S5. The interaction surface between S4 and S5 is involved in control of translational fidelity.

The protein resides in the plastid. It localises to the chloroplast. Functionally, one of the primary rRNA binding proteins, it binds directly to 16S rRNA where it nucleates assembly of the body of the 30S subunit. In terms of biological role, with S5 and S12 plays an important role in translational accuracy. This chain is Small ribosomal subunit protein uS4c (rps4), found in Yucca filamentosa (Bear-grass).